A 470-amino-acid chain; its full sequence is ATP synthase subunit beta (470 aa).

ATP is bound at residue 157 to 164 (GGAGVGKT).

It belongs to the ATPase alpha/beta chains family. F-type ATPases have 2 components, CF(1) - the catalytic core - and CF(0) - the membrane proton channel. CF(1) has five subunits: alpha(3), beta(3), gamma(1), delta(1), epsilon(1). CF(0) has three main subunits: a(1), b(2) and c(9-12). The alpha and beta chains form an alternating ring which encloses part of the gamma chain. CF(1) is attached to CF(0) by a central stalk formed by the gamma and epsilon chains, while a peripheral stalk is formed by the delta and b chains.

It localises to the cell inner membrane. The enzyme catalyses ATP + H2O + 4 H(+)(in) = ADP + phosphate + 5 H(+)(out). Functionally, produces ATP from ADP in the presence of a proton gradient across the membrane. The catalytic sites are hosted primarily by the beta subunits. This Citrifermentans bemidjiense (strain ATCC BAA-1014 / DSM 16622 / JCM 12645 / Bem) (Geobacter bemidjiensis) protein is ATP synthase subunit beta.